The sequence spans 87 residues: Small ribosomal subunit protein uS15 (87 aa).

The protein belongs to the universal ribosomal protein uS15 family. In terms of assembly, part of the 30S ribosomal subunit. Forms a bridge to the 50S subunit in the 70S ribosome, contacting the 23S rRNA.

Functionally, one of the primary rRNA binding proteins, it binds directly to 16S rRNA where it helps nucleate assembly of the platform of the 30S subunit by binding and bridging several RNA helices of the 16S rRNA. Its function is as follows. Forms an intersubunit bridge (bridge B4) with the 23S rRNA of the 50S subunit in the ribosome. The chain is Small ribosomal subunit protein uS15 from Clostridium acetobutylicum (strain ATCC 824 / DSM 792 / JCM 1419 / IAM 19013 / LMG 5710 / NBRC 13948 / NRRL B-527 / VKM B-1787 / 2291 / W).